The chain runs to 419 residues: L-rhamnose isomerase (419 aa).

His-262, Asp-294, and Asp-296 together coordinate Mn(2+).

The protein belongs to the rhamnose isomerase family. In terms of assembly, homotetramer. Mn(2+) is required as a cofactor.

It localises to the cytoplasm. The enzyme catalyses L-rhamnopyranose = L-rhamnulose. Its pathway is carbohydrate degradation; L-rhamnose degradation; glycerone phosphate from L-rhamnose: step 1/3. Its function is as follows. Catalyzes the interconversion of L-rhamnose and L-rhamnulose. This Escherichia coli O9:H4 (strain HS) protein is L-rhamnose isomerase.